The following is a 426-amino-acid chain: Protein PHOSPHATE STARVATION RESPONSE 2 (426 aa).

3 disordered regions span residues 27-81 (ATLD…PLRS), 96-123 (YTNA…QYGG), and 198-247 (TQPQ…NSKT). The segment covering 69–81 (FQSSTGSVGPLRS) has biased composition (polar residues). 2 stretches are compositionally biased toward low complexity: residues 102 to 119 (YNSQ…NYGS) and 205 to 225 (AAQS…SSQS). A compositionally biased stretch (polar residues) spans 237–246 (SGASNTSNSK). Residues 243–303 (SNSKTRMRWT…HLQKYRTARY (61 aa)) form the HTH myb-type domain. The segment at residues 274–299 (PKGVLKLMKADNLTIYHVKSHLQKYR) is a DNA-binding region (H-T-H motif). Disordered regions lie at residues 302 to 326 (RYRP…PSID) and 382 to 426 (DKAV…SGDR). The span at 303-322 (YRPELSEGSSEKKAASKEDI) shows a compositional bias: basic and acidic residues. Polar residues-rich tracts occupy residues 387-401 (ASTS…SDLP) and 411-426 (ENSQ…SGDR).

As to quaternary structure, interacts (via C-terminus) with SPX4 (via N-terminus) in the presence of inositol polyphosphate. Interacts (via C-terminus) with SPX1 and SPX2 (via SPX domain). Interacts with RLI1 in the nucleus.

The protein resides in the nucleus. It is found in the cytoplasm. Transcription factor involved in phosphate starvation signaling. Binds to P1BS, an imperfect palindromic sequence 5'-GNATATNC-3', to promote the expression of inorganic phosphate (Pi) starvation-responsive genes. Functionally redundant with PHR1 and PHR3 in regulating Pi starvation response and Pi homeostasis. Involved in both systematic and local Pi-signaling pathways. Regulates several Pi transporters. PHR2 binding to DNA is repressed redundantly by SPX1, SPX2 and SPX4 in a PI-dependent manner. The DNA-binding activity is also repressed by SPX4. Involved in root growth under Pi deprivation. Involved in the modulation of Pi response and homeostasis together with RLI1; promotes RLI1 expression in response to nitrate availability, thus triggering the nitrate-induced phosphate response (NIPR). The chain is Protein PHOSPHATE STARVATION RESPONSE 2 from Oryza sativa subsp. indica (Rice).